The sequence spans 439 residues: 26S proteasome regulatory subunit 4 homolog (439 aa).

The disordered stretch occupies residues 1 to 46; that stretch reads MGNNQSQGQGDKGEKKDQPKYQPPPPPTQFGKKKKRRGAETSTKLP. 225 to 232 is an ATP binding site; that stretch reads GEPGTGKT.

It belongs to the AAA ATPase family.

The protein localises to the cytoplasm. It localises to the nucleus. Its function is as follows. The 26S proteasome is involved in the ATP-dependent degradation of ubiquitinated proteins. The regulatory (or ATPase) complex confers ATP dependency and substrate specificity to the 26S complex. Plays an important role in regulating both growth and multicellular development. The sequence is that of 26S proteasome regulatory subunit 4 homolog (psmC1) from Dictyostelium discoideum (Social amoeba).